The primary structure comprises 473 residues: tRNA modification GTPase MnmE (473 aa).

(6S)-5-formyl-5,6,7,8-tetrahydrofolate is bound by residues Arg28, Glu93, and Arg132. Positions 228 to 394 constitute a TrmE-type G domain; it reads GVATVLVGSP…LKQQMSNMVA (167 aa). Residues 238–243, 257–263, and 282–285 each bind GTP; these read NAGKST, SHQPGTT, and DTAG. Mg(2+) contacts are provided by Ser242 and Thr263. Lys473 contributes to the (6S)-5-formyl-5,6,7,8-tetrahydrofolate binding site.

The protein belongs to the TRAFAC class TrmE-Era-EngA-EngB-Septin-like GTPase superfamily. TrmE GTPase family. Homodimer. Heterotetramer of two MnmE and two MnmG subunits. K(+) is required as a cofactor.

It localises to the cytoplasm. Its function is as follows. Exhibits a very high intrinsic GTPase hydrolysis rate. Involved in the addition of a carboxymethylaminomethyl (cmnm) group at the wobble position (U34) of certain tRNAs, forming tRNA-cmnm(5)s(2)U34. The chain is tRNA modification GTPase MnmE from Chlorobium chlorochromatii (strain CaD3).